Here is a 147-residue protein sequence, read N- to C-terminus: Hemoglobin subunit epsilon-Y2 (147 aa).

Residues 3–147 (NFTAEEKTLI…VATALSHKYH (145 aa)) enclose the Globin domain. At serine 51 the chain carries Phosphoserine. 2 residues coordinate heme b: histidine 64 and histidine 93.

Belongs to the globin family. As to expression, high expression in yolk sac blood islands, fetal liver, and embryonic erythrocytes. Very low levels in adult liver and spleen.

Its function is as follows. Hemoglobin epsilon chain is a beta-type chain found in early embryos. The chain is Hemoglobin subunit epsilon-Y2 (Hbb-y) from Mus musculus (Mouse).